A 108-amino-acid polypeptide reads, in one-letter code: Holo-[acyl-carrier-protein] synthase (108 aa).

Residues Asp9 and Glu54 each contribute to the Mg(2+) site.

The protein belongs to the P-Pant transferase superfamily. AcpS family. The cofactor is Mg(2+).

The protein resides in the cytoplasm. It carries out the reaction apo-[ACP] + CoA = holo-[ACP] + adenosine 3',5'-bisphosphate + H(+). Transfers the 4'-phosphopantetheine moiety from coenzyme A to a Ser of acyl-carrier-protein. This chain is Holo-[acyl-carrier-protein] synthase, found in Mycoplasmopsis pulmonis (strain UAB CTIP) (Mycoplasma pulmonis).